The primary structure comprises 522 residues: Gypsy retrotransposon integrase-like protein 1 (522 aa).

The 158-residue stretch at 135-292 (KVENPWSLVT…TPYFQMFSRN (158 aa)) folds into the Integrase catalytic domain. Ser502 carries the post-translational modification Phosphoserine.

As to expression, widely expressed. Also found in tumors originating from parathyroid gland, colon, stomach, bladder, uterus and prostate.

In Homo sapiens (Human), this protein is Gypsy retrotransposon integrase-like protein 1 (GIN1).